We begin with the raw amino-acid sequence, 126 residues long: Fluoride-specific ion channel FluC (126 aa).

A run of 4 helical transmembrane segments spans residues 4 to 24 (SILA…FLGL), 36 to 56 (GTLA…ALFA), 68 to 88 (LIIT…AEVV), and 99 to 119 (AFAA…AGIA). Na(+) contacts are provided by glycine 75 and threonine 78.

Belongs to the fluoride channel Fluc/FEX (TC 1.A.43) family.

The protein resides in the cell inner membrane. The enzyme catalyses fluoride(in) = fluoride(out). Its activity is regulated as follows. Na(+) is not transported, but it plays an essential structural role and its presence is essential for fluoride channel function. Fluoride-specific ion channel. Important for reducing fluoride concentration in the cell, thus reducing its toxicity. This is Fluoride-specific ion channel FluC from Chromobacterium violaceum (strain ATCC 12472 / DSM 30191 / JCM 1249 / CCUG 213 / NBRC 12614 / NCIMB 9131 / NCTC 9757 / MK).